The following is a 174-amino-acid chain: NADH-ubiquinone oxidoreductase chain 6 (174 aa).

6 helical membrane passes run 1–21 (MTYALFLLSVILVMGFVGFSS), 24–44 (SPIYGGLVLIISGAVGCAVIL), 47–67 (GGGYMGLVVFLVYLGGMMVVF), 86–106 (AEVLVSVLVGLVMEVGLVLWV), 111–131 (GVVVAVNFNSVGSWMIYEGEG), and 151–171 (WLVVVTGWTLFVGVYVVIEIA).

This sequence belongs to the complex I subunit 6 family. Core subunit of respiratory chain NADH dehydrogenase (Complex I) which is composed of 45 different subunits.

It localises to the mitochondrion inner membrane. It catalyses the reaction a ubiquinone + NADH + 5 H(+)(in) = a ubiquinol + NAD(+) + 4 H(+)(out). Its function is as follows. Core subunit of the mitochondrial membrane respiratory chain NADH dehydrogenase (Complex I) which catalyzes electron transfer from NADH through the respiratory chain, using ubiquinone as an electron acceptor. Essential for the catalytic activity and assembly of complex I. The protein is NADH-ubiquinone oxidoreductase chain 6 (MT-ND6) of Pongo pygmaeus (Bornean orangutan).